A 122-amino-acid chain; its full sequence is Large ribosomal subunit protein uL18 (122 aa).

The protein belongs to the universal ribosomal protein uL18 family. As to quaternary structure, part of the 50S ribosomal subunit; part of the 5S rRNA/L5/L18/L25 subcomplex. Contacts the 5S and 23S rRNAs.

Its function is as follows. This is one of the proteins that bind and probably mediate the attachment of the 5S RNA into the large ribosomal subunit, where it forms part of the central protuberance. The sequence is that of Large ribosomal subunit protein uL18 from Mycobacterium leprae (strain TN).